Reading from the N-terminus, the 387-residue chain is Deoxyguanosinetriphosphate triphosphohydrolase-like protein (387 aa).

The HD domain maps to 78–209 (RLTHSLEVAQ…ANLADEVAYN (132 aa)).

The protein belongs to the dGTPase family. Type 2 subfamily.

The polypeptide is Deoxyguanosinetriphosphate triphosphohydrolase-like protein (Ralstonia nicotianae (strain ATCC BAA-1114 / GMI1000) (Ralstonia solanacearum)).